The sequence spans 377 residues: 2-aminoethylphosphonate--pyruvate transaminase (377 aa).

K194 is subject to N6-(pyridoxal phosphate)lysine.

Belongs to the class-V pyridoxal-phosphate-dependent aminotransferase family. PhnW subfamily. As to quaternary structure, homodimer. The cofactor is pyridoxal 5'-phosphate.

It catalyses the reaction (2-aminoethyl)phosphonate + pyruvate = phosphonoacetaldehyde + L-alanine. In terms of biological role, involved in phosphonate degradation. The polypeptide is 2-aminoethylphosphonate--pyruvate transaminase (Cupriavidus necator (strain ATCC 17699 / DSM 428 / KCTC 22496 / NCIMB 10442 / H16 / Stanier 337) (Ralstonia eutropha)).